Here is a 217-residue protein sequence, read N- to C-terminus: ATP phosphoribosyltransferase (217 aa).

This sequence belongs to the ATP phosphoribosyltransferase family. Short subfamily. Heteromultimer composed of HisG and HisZ subunits.

It is found in the cytoplasm. It carries out the reaction 1-(5-phospho-beta-D-ribosyl)-ATP + diphosphate = 5-phospho-alpha-D-ribose 1-diphosphate + ATP. The protein operates within amino-acid biosynthesis; L-histidine biosynthesis; L-histidine from 5-phospho-alpha-D-ribose 1-diphosphate: step 1/9. Catalyzes the condensation of ATP and 5-phosphoribose 1-diphosphate to form N'-(5'-phosphoribosyl)-ATP (PR-ATP). Has a crucial role in the pathway because the rate of histidine biosynthesis seems to be controlled primarily by regulation of HisG enzymatic activity. The chain is ATP phosphoribosyltransferase from Parasynechococcus marenigrum (strain WH8102).